A 260-amino-acid chain; its full sequence is MVLIRVLANLLILQLSYAQKSSELVIGGDECNINEHRFLVALYDVSSGDFRGSGALINPEWVLTAAHCETEEMKLQFGLHSKRVPNKDKQTRVSKEKFFCESNKNYTKWNKDIMLIKLNRPVKNSTHIAPLSLPSNPPSVGSVCRIMGWGTLSDTEMILPDVPHCANINLLNYSDCQAAYPELPAKSRTLCAGILEGGKDTCSGDSGGPLICNGTFQGIASWGSTLCGYVREPGSYTKVFDHLDWIQSIIAGNTNVTCPL.

The first 18 residues, 1 to 18, serve as a signal peptide directing secretion; the sequence is MVLIRVLANLLILQLSYA. Residues 19 to 24 constitute a propeptide that is removed on maturation; sequence QKSSEL. The Peptidase S1 domain maps to 25-251; the sequence is VIGGDECNIN…HLDWIQSIIA (227 aa). Disulfide bonds link Cys31/Cys165, Cys100/Cys258, Cys144/Cys212, Cys176/Cys191, and Cys202/Cys227. The Charge relay system role is filled by His67. Residue Asn105 is glycosylated (N-linked (GlcNAc...) asparagine). Catalysis depends on Asp112, which acts as the Charge relay system. N-linked (GlcNAc...) asparagine glycosylation is found at Asn124 and Asn172. The active-site Charge relay system is Ser206. Residues Asn213 and Asn255 are each glycosylated (N-linked (GlcNAc...) asparagine).

Belongs to the peptidase S1 family. Snake venom subfamily. In terms of assembly, monomer. As to expression, expressed by the venom gland.

It is found in the secreted. Functionally, snake venom serine protease that may act in the hemostasis system of the prey. The protein is Snake venom serine protease KN5 of Trimeresurus stejnegeri (Chinese green tree viper).